Reading from the N-terminus, the 783-residue chain is Serine/threonine-protein kinase SIK1 (783 aa).

The Protein kinase domain maps to 27 to 278; it reads YDIERTLGKG…IAQIRQHRWM (252 aa). ATP contacts are provided by residues 33–41 and Lys56; that span reads LGKGNFAVV. Residue Asp149 is the Proton acceptor of the active site. Phosphothreonine; by LKB1 and GSK3-beta is present on Thr182. Ser186 is subject to Phosphoserine; by autocatalysis. The UBA domain maps to 303 to 343; that stretch reads DYDEQALGIMQTLGVDRQRTVESLQNSSYNHFAAIYYLLLE. A Phosphothreonine; by CaMK1 modification is found at Thr322. Disordered stretches follow at residues 353 to 377 and 449 to 477; these read CARP…VPQE and RQGP…LAEV. Phosphothreonine; by PKA is present on Thr473. A Phosphoserine; by PKA modification is found at Ser575. Positions 583 to 612 are RK-rich region; required for cAMP responsiveness and nuclear localization; that stretch reads LKAFRQQLRKTTRTKGFLGLNKIKGLARQV. The tract at residues 619–643 is disordered; the sequence is RASRGGLSPFHAPAQSPGLHGGAAG.

This sequence belongs to the protein kinase superfamily. CAMK Ser/Thr protein kinase family. AMPK subfamily. As to quaternary structure, interacts with ATP1A1. Interacts (when phosphorylated on Thr-182 and Ser-186) with YWHAZ. Interacts (when phosphorylated at Thr-473 and/or Ser-575) with 14-3-3 proteins; the interaction inhibits kinase activity towards TORCs. There is a cooperative effect of the phosphorylation sites in 14-3-3 binding as the interaction is stronger when both Thr-473 and Ser-575 are modified. It depends on Mg(2+) as a cofactor. Post-translationally, phosphorylated at Thr-182 by STK11/LKB1 in complex with STE20-related adapter-alpha (STRADA) pseudo kinase and CAB39, leading to its activation. Phosphorylation at Thr-182 promotes autophosphorylation at Ser-186, which is required for sustained activity. Autophosphorylation at Ser-186 is maintained by sequential phosphorylation at Thr-182 by GSK3-beta. GSK3-beta cannot initiate phosphorylation at Thr-182, it can only maintain it. Phosphorylation at Ser-575 in response to cAMP signaling promotes translocation to the cytoplasm. Phosphorylation at Thr-322 by CaMK1 following intracellular sodium concentration leads to activation.

It localises to the cytoplasm. The protein localises to the nucleus. The catalysed reaction is L-seryl-[protein] + ATP = O-phospho-L-seryl-[protein] + ADP + H(+). The enzyme catalyses L-threonyl-[protein] + ATP = O-phospho-L-threonyl-[protein] + ADP + H(+). Its activity is regulated as follows. Activated by phosphorylation on Thr-182. Also activated by phosphorylation on Thr-322 in response to increases in intracellular sodium in parallel with elevations in intracellular calcium through the reversible sodium/calcium exchanger. Inhibited by phosphorylation at Thr-473 and Ser-575, probably by PKA, which triggers interaction with 14-3-3 proteins. In terms of biological role, serine/threonine-protein kinase involved in various processes such as cell cycle regulation, gluconeogenesis and lipogenesis regulation, muscle growth and differentiation and tumor suppression. Phosphorylates HDAC4, HDAC5, PPME1, SREBF1, CRTC1/TORC1. Inhibits CREB activity by phosphorylating and inhibiting activity of TORCs, the CREB-specific coactivators, like CRTC2/TORC2 and CRTC3/TORC3 in response to cAMP signaling. Acts as a tumor suppressor and plays a key role in p53/TP53-dependent anoikis, a type of apoptosis triggered by cell detachment: required for phosphorylation of p53/TP53 in response to loss of adhesion and is able to suppress metastasis. Part of a sodium-sensing signaling network, probably by mediating phosphorylation of PPME1: following increases in intracellular sodium, SIK1 is activated by CaMK1 and phosphorylates PPME1 subunit of protein phosphatase 2A (PP2A), leading to dephosphorylation of sodium/potassium-transporting ATPase ATP1A1 and subsequent increase activity of ATP1A1. Acts as a regulator of muscle cells by phosphorylating and inhibiting class II histone deacetylases HDAC4 and HDAC5, leading to promote expression of MEF2 target genes in myocytes. Also required during cardiomyogenesis by regulating the exit of cardiomyoblasts from the cell cycle via down-regulation of CDKN1C/p57Kip2. Acts as a regulator of hepatic gluconeogenesis by phosphorylating and repressing the CREB-specific coactivators CRTC1/TORC1 and CRTC2/TORC2, leading to inhibit CREB activity. Also regulates hepatic lipogenesis by phosphorylating and inhibiting SREBF1. In concert with CRTC1/TORC1, regulates the light-induced entrainment of the circadian clock by attenuating PER1 induction; represses CREB-mediated transcription of PER1 by phosphorylating and deactivating CRTC1/TORC1. This is Serine/threonine-protein kinase SIK1 (SIK1) from Homo sapiens (Human).